The sequence spans 901 residues: Probable inorganic carbon transporter subunit DabA (901 aa).

The Zn(2+) site is built by Cys424, Asp426, His606, and Cys621.

This sequence belongs to the inorganic carbon transporter (TC 9.A.2) DabA family. As to quaternary structure, forms a complex with DabB. Zn(2+) is required as a cofactor.

It is found in the cell membrane. Its function is as follows. Part of an energy-coupled inorganic carbon pump. The polypeptide is Probable inorganic carbon transporter subunit DabA (Staphylococcus aureus (strain Mu3 / ATCC 700698)).